Reading from the N-terminus, the 454-residue chain is N-myc 2 proto-oncogene protein (454 aa).

3 disordered regions span residues 133-166, 231-270, and 326-374; these read EKMQ…HSGT, AAPP…EEEE, and SPYV…VRRR. Acidic residues predominate over residues 256–270; sequence ALSDEVDEEEDEEEE. Residues 363-374 are compositionally biased toward basic and acidic residues; that stretch reads RKSDSEDSVRRR. The bHLH domain occupies 371–423; it reads VRRRNHNILERQRRNDLRSSFTTLRDHVPELVKNEKAAKVVILKKACEYVHYL. Residues 423-444 are leucine-zipper; that stretch reads LQAKEHQLLMEKEKLQARQQQL.

As to quaternary structure, efficient DNA binding requires dimerization with another bHLH protein.

Its subcellular location is the nucleus. This chain is N-myc 2 proto-oncogene protein (N-MYC2), found in Otospermophilus beecheyi (California ground squirrel).